Consider the following 563-residue polypeptide: MLDFKILEKIPNKSGVYIFKKGEEYIYIGKAKELKKRLTSHFKAKDGKSKLIVEEADDLQVILLDNEKEALILEANMIYKYKPKYNAMLKDTQVYPYIRISNDEIPYLEIVRNRKGEGEFYGPFTNVYFTRQLFEVLRKVYKFRTCKRDITKLKKPCMDYHLGLCSGVCINEESPEDYKKKINEVKNVLKGKFSNVISFIKLKMEQHARLLDFENAAKYRDILLNFNKVMESQGVVLPESVNIDLVVGKHKTFLVFKIRSGYLISKLVYEYDGHIVDFIELFYTQNTSDIPEKIIVEKENKELKNIAKILGIKIAQAKDDLELQLLNKAIDNLNYEIGLILTNKIILKQMKELLGLMKLPNRIEGIDISHLAGKNTVASLVVFENGEIKKEEYRRYKLGDILDDFESIRIVVKKRYTKHNVPDLLFIDGGIGQVNAAYQSLKEIGKERECDVIGLAKEEETIVTLHGEIRLAFDHPVLRLLVKIRDETHRVANEFTRNLSTKKSLRSILDEIKWIGPKRKKTLLERYTSIEEILSVSRSEIEQLIGKKATESLLNELSYRRNL.

The GIY-YIG domain occupies 12–87 (NKSGVYIFKK…IYKYKPKYNA (76 aa)). The 36-residue stretch at 194 to 229 (SNVISFIKLKMEQHARLLDFENAAKYRDILLNFNKV) folds into the UVR domain.

It belongs to the UvrC family. As to quaternary structure, interacts with UvrB in an incision complex.

It is found in the cytoplasm. In terms of biological role, the UvrABC repair system catalyzes the recognition and processing of DNA lesions. UvrC both incises the 5' and 3' sides of the lesion. The N-terminal half is responsible for the 3' incision and the C-terminal half is responsible for the 5' incision. This chain is UvrABC system protein C, found in Fervidobacterium nodosum (strain ATCC 35602 / DSM 5306 / Rt17-B1).